The sequence spans 344 residues: UDP-3-O-acylglucosamine N-acyltransferase (344 aa).

H244 serves as the catalytic Proton acceptor.

It belongs to the transferase hexapeptide repeat family. LpxD subfamily. As to quaternary structure, homotrimer.

It catalyses the reaction a UDP-3-O-[(3R)-3-hydroxyacyl]-alpha-D-glucosamine + a (3R)-hydroxyacyl-[ACP] = a UDP-2-N,3-O-bis[(3R)-3-hydroxyacyl]-alpha-D-glucosamine + holo-[ACP] + H(+). The protein operates within bacterial outer membrane biogenesis; LPS lipid A biosynthesis. In terms of biological role, catalyzes the N-acylation of UDP-3-O-acylglucosamine using 3-hydroxyacyl-ACP as the acyl donor. Is involved in the biosynthesis of lipid A, a phosphorylated glycolipid that anchors the lipopolysaccharide to the outer membrane of the cell. The chain is UDP-3-O-acylglucosamine N-acyltransferase from Pseudoalteromonas atlantica (strain T6c / ATCC BAA-1087).